The primary structure comprises 343 residues: NADH-quinone oxidoreductase subunit H (343 aa).

Helical transmembrane passes span 5–25, 76–96, 119–139, 158–178, 190–210, 243–263, 284–304, and 323–343; these read FIIEKSVVIVAVFALTMLMAM, FLFVVGPAIAMSTALMTSAVI, ALLYIFAVVSVGVYGIMIGGW, VSYEVAMGLSMIALLMMTGTL, MNWNVFYQPVSFLIFLICAFA, LFAEYANMFISSAILAILFFG, ILGFLALFIKICGFIFFYMWV, and ILIPLAILNIMVTGICLLLFK.

The protein belongs to the complex I subunit 1 family. NDH-1 is composed of 14 different subunits. Subunits NuoA, H, J, K, L, M, N constitute the membrane sector of the complex.

The protein localises to the cell inner membrane. The catalysed reaction is a quinone + NADH + 5 H(+)(in) = a quinol + NAD(+) + 4 H(+)(out). Functionally, NDH-1 shuttles electrons from NADH, via FMN and iron-sulfur (Fe-S) centers, to quinones in the respiratory chain. The immediate electron acceptor for the enzyme in this species is believed to be ubiquinone. Couples the redox reaction to proton translocation (for every two electrons transferred, four hydrogen ions are translocated across the cytoplasmic membrane), and thus conserves the redox energy in a proton gradient. This subunit may bind ubiquinone. The chain is NADH-quinone oxidoreductase subunit H from Flavobacterium psychrophilum (strain ATCC 49511 / DSM 21280 / CIP 103535 / JIP02/86).